The following is a 388-amino-acid chain: MRYLTAGESHGPSLTAIIEGIPAGLKLSAKDINEDLKRRQGGYGRGNRMKIETDQVIISSGVRHGKTLGSPITLTVTNKDHSKWLDIMSVEDIEERLKQKRRIKHPRPGHADLVGGIKYRFDDLRNALERSSARETTMRVAIGAIAKRILKEIGIEIANHIVVFGGKEITVPDKLTVQQIKVLSSQSQVAIVNPSFEQEIKDYIDSVKKAGDTIGGVIETIVGGVPVGLGSYVHWDRKLDAKIAQAVVSINAFKGVEFGLGFKSGFLKGSQVMDSISWTKDQGYIRQSNNLGGFEGGMTNGEPIVVRGVMKPIPTLYKPLMSVDIDTHEPYRATVERSDPTALPAAGVVMEAVVATVLVTEVLEKFSSDNMYELKEAVKLYRNYVNHF.

NADP(+)-binding residues include R39 and R45. Residues 130–132 (RSS), 251–252 (NA), G296, 311–315 (KPIPT), and R337 each bind FMN.

This sequence belongs to the chorismate synthase family. Homotetramer. FMNH2 serves as cofactor.

The enzyme catalyses 5-O-(1-carboxyvinyl)-3-phosphoshikimate = chorismate + phosphate. The protein operates within metabolic intermediate biosynthesis; chorismate biosynthesis; chorismate from D-erythrose 4-phosphate and phosphoenolpyruvate: step 7/7. Functionally, catalyzes the anti-1,4-elimination of the C-3 phosphate and the C-6 proR hydrogen from 5-enolpyruvylshikimate-3-phosphate (EPSP) to yield chorismate, which is the branch point compound that serves as the starting substrate for the three terminal pathways of aromatic amino acid biosynthesis. This reaction introduces a second double bond into the aromatic ring system. The sequence is that of Chorismate synthase from Streptococcus agalactiae serotype Ia (strain ATCC 27591 / A909 / CDC SS700).